The chain runs to 161 residues: Endoribonuclease YbeY (161 aa).

His120, His124, and Asp130 together coordinate Zn(2+).

It belongs to the endoribonuclease YbeY family. The cofactor is Zn(2+).

It localises to the cytoplasm. Its function is as follows. Single strand-specific metallo-endoribonuclease involved in late-stage 70S ribosome quality control and in maturation of the 3' terminus of the 16S rRNA. This Chlamydia trachomatis serovar A (strain ATCC VR-571B / DSM 19440 / HAR-13) protein is Endoribonuclease YbeY.